We begin with the raw amino-acid sequence, 153 residues long: Aspartate carbamoyltransferase regulatory chain (153 aa).

Positions 109, 114, 138, and 141 each coordinate Zn(2+).

The protein belongs to the PyrI family. In terms of assembly, contains catalytic and regulatory chains. Zn(2+) is required as a cofactor.

Involved in allosteric regulation of aspartate carbamoyltransferase. The polypeptide is Aspartate carbamoyltransferase regulatory chain (Shigella flexneri serotype 5b (strain 8401)).